Consider the following 30-residue polypeptide: Varv peptide G (30 aa).

The cyclopeptide (Gly-Asn) cross-link spans 1-30 (GVPVCGETCFGGTCNTPGCSCDPWPVCSRN). 3 cysteine pairs are disulfide-bonded: cysteine 5-cysteine 19, cysteine 9-cysteine 21, and cysteine 14-cysteine 27.

In terms of processing, this is a cyclic peptide.

In terms of biological role, probably participates in a plant defense mechanism. This Viola arvensis (European field pansy) protein is Varv peptide G.